The primary structure comprises 877 residues: DNA polymerase I (877 aa).

One can recognise a 5'-3' exonuclease domain in the interval 180-270 (TPAQFIDLKA…EIGLDDTLLK (91 aa)). A 3'-5' exonuclease domain is found at 308 to 468 (DEIDFEIVTD…AKEKMMAELL (161 aa)).

The protein belongs to the DNA polymerase type-A family. In terms of assembly, single-chain monomer with multiple functions.

It carries out the reaction DNA(n) + a 2'-deoxyribonucleoside 5'-triphosphate = DNA(n+1) + diphosphate. Its function is as follows. In addition to polymerase activity, this DNA polymerase exhibits 3'-5' and 5'-3' exonuclease activity. In Lactococcus lactis subsp. lactis (strain IL1403) (Streptococcus lactis), this protein is DNA polymerase I (polA).